Here is a 391-residue protein sequence, read N- to C-terminus: Secreted aspartic protease 1 (391 aa).

The N-terminal stretch at 1-18 is a signal peptide; it reads MFLKNIFIALAIALLVDA. Positions 19–50 are cleaved as a propeptide — activation peptide; that stretch reads SPAKRSPGFVTLDFDVIKTPVNATGQEGKVKR. Asparagine 40 carries an N-linked (GlcNAc...) asparagine glycan. The 314-residue stretch at 64 to 377 folds into the Peptidase A1 domain; it reads YAADITIGSN…DLDDDKISLA (314 aa). The active site involves aspartate 82. 82–84 is a pepstatin A binding site; the sequence is DTG. A disulfide bond links cysteine 97 and cysteine 109. Zn(2+) contacts are provided by aspartate 241 and aspartate 263. Residue aspartate 267 is part of the active site. 267–271 is a binding site for pepstatin A; it reads DSGTT. A disulfide bridge links cysteine 305 with cysteine 343.

This sequence belongs to the peptidase A1 family. As to quaternary structure, monomer.

It localises to the secreted. It carries out the reaction Preferential cleavage at the carboxyl of hydrophobic amino acids, but fails to cleave 15-Leu-|-Tyr-16, 16-Tyr-|-Leu-17 and 24-Phe-|-Phe-25 of insulin B chain. Activates trypsinogen, and degrades keratin.. Its activity is regulated as follows. Inhibited by pepstatin A analogs and squash aspartic peptidase inhibitor (SQAPI). Its function is as follows. Secreted aspartic peptidases (SAPs) are a group of ten acidic hydrolases considered as key virulence factors. These enzymes supply the fungus with nutrient amino acids as well as are able to degrade the selected host's proteins involved in the immune defense. Induces host inflammatory cytokine production in a proteolytic activity-independent way. Plays a role in tissue damage during superficial infection. Moreover, acts toward human hemoglobin though limited proteolysis to generate a variety of antimicrobial hemocidins, enabling to compete with the other microorganisms of the same physiological niche using the microbicidal peptides generated from the host protein. Functionally, plays a key role in defense against host by cleaving histatin-5 (Hst 5), a peptide from human saliva that carries out fungicidal activity. The cleavage rate decreases in an order of SAP2 &gt; SAP9 &gt; SAP3 &gt; SAP7 &gt; SAP4 &gt; SAP1 &gt; SAP8. The first cleavage occurs between residues 'Lys-17' and 'His-18' of Hst 5, giving DSHAKRHHGYKRKFHEK and HHSHRGY peptides. Further fragmentation by SAP1 results in AKRHHGYKRKFHEK and AKRHHGY products. This chain is Secreted aspartic protease 1, found in Candida albicans (Yeast).